The following is a 207-amino-acid chain: ADP-ribosylation factor (207 aa).

The N-myristoyl glycine moiety is linked to residue glycine 2. GTP-binding positions include 32-39 (GLDGAGKT), 75-79 (DIGGQ), and 133-136 (NKID).

Belongs to the small GTPase superfamily. Arf family.

The protein resides in the golgi apparatus. Functionally, GTP-binding protein involved in protein trafficking; may modulate vesicle budding and uncoating within the Golgi apparatus. The chain is ADP-ribosylation factor (ARF-1) from Encephalitozoon cuniculi (strain GB-M1) (Microsporidian parasite).